The chain runs to 158 residues: uncharacterized protein (158 aa).

2 disordered regions span residues 1–86 (MDFR…DHWW) and 138–158 (ASQV…LLGF). A compositionally biased stretch (low complexity) spans 7-76 (SPTTCTTPAS…PTPASSGSAA (70 aa)).

This is an uncharacterized protein from Homo sapiens (Human).